Reading from the N-terminus, the 353-residue chain is Basic membrane protein C (353 aa).

The signal sequence occupies residues 1-16 (MFKRFIFITLSLLVFA). Cysteine 17 carries N-palmitoyl cysteine lipidation. A lipid anchor (S-diacylglycerol cysteine) is attached at cysteine 17.

The protein belongs to the BMP lipoprotein family. As to quaternary structure, monomer.

The protein resides in the cell inner membrane. Its function is as follows. May be part of an ABC-type nucleoside uptake system involved in the purine salvage pathway. The sequence is that of Basic membrane protein C (bmpC) from Borreliella burgdorferi (strain N40) (Borrelia burgdorferi).